Reading from the N-terminus, the 366-residue chain is Peroxisomal (S)-2-hydroxy-acid oxidase GLO4 (366 aa).

In terms of domain architecture, FMN hydroxy acid dehydrogenase spans methionine 1–aspartate 360. An a 2-oxocarboxylate-binding site is contributed by tyrosine 27. FMN contacts are provided by residues proline 80–glycine 82, serine 109, glutamine 130–tyrosine 132, and threonine 158. Tyrosine 132 contacts a 2-oxocarboxylate. Arginine 167 is an a 2-oxocarboxylate binding site. FMN-binding residues include lysine 231 and serine 253. Catalysis depends on histidine 255, which acts as the Proton acceptor. Arginine 258 serves as a coordination point for a 2-oxocarboxylate. Residues aspartate 286–arginine 290 and residue 309–residue 310 contribute to the FMN site. Residues serine 364–leucine 366 carry the Microbody targeting signal motif.

The protein belongs to the FMN-dependent alpha-hydroxy acid dehydrogenase family. As to quaternary structure, homotetramer. It depends on FMN as a cofactor.

The protein localises to the peroxisome. It carries out the reaction a (2S)-2-hydroxycarboxylate + O2 = a 2-oxocarboxylate + H2O2. It participates in lipid metabolism; fatty acid metabolism. Its function is as follows. Oxidase that catalyzes the oxidation of a broad range of 2-hydroxyacids to the corresponding 2-oxoacids, with a reduction of O2 to H2O2. May be involved in a general medium- and long-chain fatty acid catabolic pathway such as alpha-oxidation. The chain is Peroxisomal (S)-2-hydroxy-acid oxidase GLO4 (GLO4) from Oryza sativa subsp. indica (Rice).